Here is a 100-residue protein sequence, read N- to C-terminus: Urease subunit gamma (100 aa).

It belongs to the urease gamma subunit family. In terms of assembly, heterotrimer of UreA (gamma), UreB (beta) and UreC (alpha) subunits. Three heterotrimers associate to form the active enzyme.

Its subcellular location is the cytoplasm. It catalyses the reaction urea + 2 H2O + H(+) = hydrogencarbonate + 2 NH4(+). The protein operates within nitrogen metabolism; urea degradation; CO(2) and NH(3) from urea (urease route): step 1/1. The chain is Urease subunit gamma from Blochmanniella pennsylvanica (strain BPEN).